The primary structure comprises 575 residues: 2-isopropylmalate synthase (575 aa).

Positions 31–305 constitute a Pyruvate carboxyltransferase domain; that stretch reads PTWLSTDLRD…APGLDFSDIA (275 aa). 4 residues coordinate Mg(2+): Asp40, His244, His246, and Asn280. Residues 437–575 are regulatory domain; sequence PVQASPDFSD…RFAGEEQGKG (139 aa).

The protein belongs to the alpha-IPM synthase/homocitrate synthase family. LeuA type 2 subfamily. As to quaternary structure, homodimer. The cofactor is Mg(2+).

The protein localises to the cytoplasm. It catalyses the reaction 3-methyl-2-oxobutanoate + acetyl-CoA + H2O = (2S)-2-isopropylmalate + CoA + H(+). The protein operates within amino-acid biosynthesis; L-leucine biosynthesis; L-leucine from 3-methyl-2-oxobutanoate: step 1/4. Functionally, catalyzes the condensation of the acetyl group of acetyl-CoA with 3-methyl-2-oxobutanoate (2-ketoisovalerate) to form 3-carboxy-3-hydroxy-4-methylpentanoate (2-isopropylmalate). The polypeptide is 2-isopropylmalate synthase (Herbaspirillum seropedicae (strain SmR1)).